A 122-amino-acid polypeptide reads, in one-letter code: Large ribosomal subunit protein uL14c (122 aa).

Belongs to the universal ribosomal protein uL14 family. Part of the 50S ribosomal subunit.

Its subcellular location is the plastid. It localises to the chloroplast. In terms of biological role, binds to 23S rRNA. This is Large ribosomal subunit protein uL14c from Phaseolus vulgaris (Kidney bean).